We begin with the raw amino-acid sequence, 256 residues long: Alcohol dehydrogenase (256 aa).

Residue 12–35 (FVAGLGGIGLDTSKELVKRDLKNL) participates in NAD(+) binding. Serine 140 contributes to the substrate binding site. Residue tyrosine 153 is the Proton acceptor of the active site.

This sequence belongs to the short-chain dehydrogenases/reductases (SDR) family. As to quaternary structure, homodimer.

It carries out the reaction a primary alcohol + NAD(+) = an aldehyde + NADH + H(+). The catalysed reaction is a secondary alcohol + NAD(+) = a ketone + NADH + H(+). This is Alcohol dehydrogenase (Adh) from Drosophila erecta (Fruit fly).